A 270-amino-acid chain; its full sequence is Putative pyruvate, phosphate dikinase regulatory protein 2 (270 aa).

151–158 is an ADP binding site; sequence GVSRTSKT.

Belongs to the pyruvate, phosphate/water dikinase regulatory protein family. PDRP subfamily.

It catalyses the reaction N(tele)-phospho-L-histidyl/L-threonyl-[pyruvate, phosphate dikinase] + ADP = N(tele)-phospho-L-histidyl/O-phospho-L-threonyl-[pyruvate, phosphate dikinase] + AMP + H(+). The catalysed reaction is N(tele)-phospho-L-histidyl/O-phospho-L-threonyl-[pyruvate, phosphate dikinase] + phosphate + H(+) = N(tele)-phospho-L-histidyl/L-threonyl-[pyruvate, phosphate dikinase] + diphosphate. Its function is as follows. Bifunctional serine/threonine kinase and phosphorylase involved in the regulation of the pyruvate, phosphate dikinase (PPDK) by catalyzing its phosphorylation/dephosphorylation. The protein is Putative pyruvate, phosphate dikinase regulatory protein 2 of Listeria innocua serovar 6a (strain ATCC BAA-680 / CLIP 11262).